The chain runs to 252 residues: Adaptation to cold protein B (252 aa).

As to quaternary structure, interacts with AtcC, but not with AtcA and AtcJ. Interacts with the RNA polymerase subunits RpoB and RpoC.

Involved in cold adaptation. Directly interacts with the RNA polymerase and decreases its activity. May direct the DnaK chaperone to the RNA polymerase to sustain life at low temperatures. Overproduction prevents bacterial growth due to RNA polymerase inhibition. This Shewanella oneidensis (strain ATCC 700550 / JCM 31522 / CIP 106686 / LMG 19005 / NCIMB 14063 / MR-1) protein is Adaptation to cold protein B.